Reading from the N-terminus, the 102-residue chain is MVYAVVRAGGRQEKVEVGTIVTMDRVKDGENGTIELAAVLLVDGDKITSDAKSLSKVTVTATVLEDLRGPKIVIQKFKNKTGYKKRQGHRQELTRVKIIGIK.

It belongs to the bacterial ribosomal protein bL21 family. In terms of assembly, part of the 50S ribosomal subunit. Contacts protein L20.

This protein binds to 23S rRNA in the presence of protein L20. The chain is Large ribosomal subunit protein bL21 from Leifsonia xyli subsp. xyli (strain CTCB07).